The primary structure comprises 451 residues: Glucose-6-phosphate isomerase (451 aa).

At T38 the chain carries Phosphothreonine. E290 functions as the Proton donor in the catalytic mechanism. Catalysis depends on residues H311 and K425.

The protein belongs to the GPI family.

The protein localises to the cytoplasm. It catalyses the reaction alpha-D-glucose 6-phosphate = beta-D-fructose 6-phosphate. It functions in the pathway carbohydrate biosynthesis; gluconeogenesis. Its pathway is carbohydrate degradation; glycolysis; D-glyceraldehyde 3-phosphate and glycerone phosphate from D-glucose: step 2/4. Functionally, catalyzes the reversible isomerization of glucose-6-phosphate to fructose-6-phosphate. In Shouchella clausii (strain KSM-K16) (Alkalihalobacillus clausii), this protein is Glucose-6-phosphate isomerase.